A 278-amino-acid chain; its full sequence is Shikimate dehydrogenase (NADP(+)) (278 aa).

Residues 15-17 (SMS) and Thr-62 each bind shikimate. Residue Lys-66 is the Proton acceptor of the active site. Glu-78 serves as a coordination point for NADP(+). Positions 87 and 102 each coordinate shikimate. NADP(+) contacts are provided by residues 127–131 (GAGGA), 151–156 (NRTPEK), and Ile-217. Tyr-219 contributes to the shikimate binding site. Residue Gly-240 participates in NADP(+) binding.

It belongs to the shikimate dehydrogenase family. As to quaternary structure, homodimer.

It carries out the reaction shikimate + NADP(+) = 3-dehydroshikimate + NADPH + H(+). The protein operates within metabolic intermediate biosynthesis; chorismate biosynthesis; chorismate from D-erythrose 4-phosphate and phosphoenolpyruvate: step 4/7. Functionally, involved in the biosynthesis of the chorismate, which leads to the biosynthesis of aromatic amino acids. Catalyzes the reversible NADPH linked reduction of 3-dehydroshikimate (DHSA) to yield shikimate (SA). This chain is Shikimate dehydrogenase (NADP(+)), found in Bacillus licheniformis (strain ATCC 14580 / DSM 13 / JCM 2505 / CCUG 7422 / NBRC 12200 / NCIMB 9375 / NCTC 10341 / NRRL NRS-1264 / Gibson 46).